A 195-amino-acid chain; its full sequence is Recombination protein RecR (195 aa).

Residues 53 to 68 (CSVCFNIDVKSPCSIC) form a C4-type zinc finger. A Toprim domain is found at 76 to 171 (QLLCIVEELG…KITRLACGIP (96 aa)).

It belongs to the RecR family.

May play a role in DNA repair. It seems to be involved in an RecBC-independent recombinational process of DNA repair. It may act with RecF and RecO. This chain is Recombination protein RecR, found in Ehrlichia canis (strain Jake).